A 111-amino-acid polypeptide reads, in one-letter code: Holo-[acyl-carrier-protein] synthase (111 aa).

Residues aspartate 8 and glutamate 57 each contribute to the Mg(2+) site.

Belongs to the P-Pant transferase superfamily. AcpS family. The cofactor is Mg(2+).

The protein resides in the cytoplasm. The enzyme catalyses apo-[ACP] + CoA = holo-[ACP] + adenosine 3',5'-bisphosphate + H(+). Transfers the 4'-phosphopantetheine moiety from coenzyme A to a Ser of acyl-carrier-protein. The polypeptide is Holo-[acyl-carrier-protein] synthase (Mycoplasmoides gallisepticum (strain R(low / passage 15 / clone 2)) (Mycoplasma gallisepticum)).